The sequence spans 555 residues: E3 ubiquitin-protein ligase NEURL1B (555 aa).

The region spanning 38 to 194 (APRFHAQAKG…ITDEVQLLES (157 aa)) is the NHR 1 domain. Residue T199 is modified to Phosphothreonine. Positions 279-433 (DLRFHATRGP…GVAGQLRLLG (155 aa)) constitute an NHR 2 domain. The interval 436 to 493 (QSSPATTTPSGSLSGSQDDSDSDMTFSVNQSSSASESSLVTAPSSPLSPPVSPVFSPP) is disordered. Residues 462–480 (SVNQSSSASESSLVTAPSS) are compositionally biased toward low complexity. Residues 481 to 493 (PLSPPVSPVFSPP) show a composition bias toward pro residues. An RING-type zinc finger spans residues 503-543 (CTVCFDGEVDTVIYTCGHMCLCHSCGLRLKRQARACCPICR).

As to quaternary structure, interacts with JAG1, DLL1 and DLL4. Highest expression in brain, prostate and small intestine. In the brain the levels are higher in fetal than in adult stage. In the adult brain the highest levels are detected in the olfactory system, cerebellar cortex, optic nerve and the frontal lobe.

Its subcellular location is the cytoplasm. It carries out the reaction S-ubiquitinyl-[E2 ubiquitin-conjugating enzyme]-L-cysteine + [acceptor protein]-L-lysine = [E2 ubiquitin-conjugating enzyme]-L-cysteine + N(6)-ubiquitinyl-[acceptor protein]-L-lysine.. The protein operates within protein modification; protein ubiquitination. Functionally, E3 ubiquitin-protein ligase involved in regulation of the Notch pathway through influencing the stability and activity of several Notch ligands. The chain is E3 ubiquitin-protein ligase NEURL1B (NEURL1B) from Homo sapiens (Human).